The chain runs to 407 residues: Peptidase T (407 aa).

His-82 provides a ligand contact to Zn(2+). Residue Asp-84 is part of the active site. Asp-143 contributes to the Zn(2+) binding site. Glu-177 (proton acceptor) is an active-site residue. Zn(2+) is bound by residues Glu-178, Asp-200, and His-382.

It belongs to the peptidase M20B family. Requires Zn(2+) as cofactor.

It localises to the cytoplasm. It carries out the reaction Release of the N-terminal residue from a tripeptide.. Cleaves the N-terminal amino acid of tripeptides. The chain is Peptidase T from Streptococcus uberis (strain ATCC BAA-854 / 0140J).